The primary structure comprises 264 residues: Thymidylate synthase (264 aa).

Arg-21 provides a ligand contact to dUMP. His-51 contacts (6R)-5,10-methylene-5,6,7,8-tetrahydrofolate. Position 126–127 (126–127) interacts with dUMP; that stretch reads RR. Catalysis depends on Cys-146, which acts as the Nucleophile. DUMP is bound by residues 166 to 169, Asn-177, and 207 to 209; these read RSAD and HLY. A (6R)-5,10-methylene-5,6,7,8-tetrahydrofolate-binding site is contributed by Asp-169. (6R)-5,10-methylene-5,6,7,8-tetrahydrofolate is bound at residue Ala-263.

Belongs to the thymidylate synthase family. Bacterial-type ThyA subfamily. Homodimer.

Its subcellular location is the cytoplasm. The enzyme catalyses dUMP + (6R)-5,10-methylene-5,6,7,8-tetrahydrofolate = 7,8-dihydrofolate + dTMP. It participates in pyrimidine metabolism; dTTP biosynthesis. Its function is as follows. Catalyzes the reductive methylation of 2'-deoxyuridine-5'-monophosphate (dUMP) to 2'-deoxythymidine-5'-monophosphate (dTMP) while utilizing 5,10-methylenetetrahydrofolate (mTHF) as the methyl donor and reductant in the reaction, yielding dihydrofolate (DHF) as a by-product. This enzymatic reaction provides an intracellular de novo source of dTMP, an essential precursor for DNA biosynthesis. This is Thymidylate synthase from Aromatoleum aromaticum (strain DSM 19018 / LMG 30748 / EbN1) (Azoarcus sp. (strain EbN1)).